The sequence spans 401 residues: Deoxyhypusine synthase-like protein (401 aa).

This sequence belongs to the deoxyhypusine synthase family.

The polypeptide is Deoxyhypusine synthase-like protein (Thermosynechococcus vestitus (strain NIES-2133 / IAM M-273 / BP-1)).